A 184-amino-acid polypeptide reads, in one-letter code: MLPKISLAAVGLTVGGILTITGFVAYALDYATLNLAGFFYGIPLVLGGLALKAAELKPIPFSQPTSEKIIALRNQLATPTQNQIRKDVTRYRYGQEAHLDESLERLGLSPTDEERPVLTSLLEQDWEGKYVLTLTFTSPFISLETWQEKQEKIAKFFGPDLEVTVAEPEEKVVTVNLISQLALP.

2 helical membrane passes run 5 to 25 (ISLA…GFVA) and 31 to 51 (ATLN…GLAL).

It localises to the cellular thylakoid membrane. The sequence is that of Thylakoid membrane protein slr0575 from Synechocystis sp. (strain ATCC 27184 / PCC 6803 / Kazusa).